The following is a 373-amino-acid chain: Mannitol-1-phosphate 5-dehydrogenase (373 aa).

3–14 provides a ligand contact to NAD(+); the sequence is ALHFGAGNIGRG.

This sequence belongs to the mannitol dehydrogenase family.

The catalysed reaction is D-mannitol 1-phosphate + NAD(+) = beta-D-fructose 6-phosphate + NADH + H(+). This is Mannitol-1-phosphate 5-dehydrogenase from Bacillus pumilus (strain SAFR-032).